We begin with the raw amino-acid sequence, 193 residues long: Penicillin-binding protein activator LpoB (193 aa).

The N-terminal stretch at 1 to 16 (MKRYLSVALAALVLTG) is a signal peptide. Residue cysteine 17 is the site of N-palmitoyl cysteine attachment. Cysteine 17 carries S-diacylglycerol cysteine lipidation. The disordered stretch occupies residues 24–55 (EPTTPPVTIEPVTPPVPETPPPVDNVPPPPKM). Residues 35–54 (VTPPVPETPPPVDNVPPPPK) are compositionally biased toward pro residues.

Belongs to the LpoB family. Interacts with PBP1b.

It is found in the cell outer membrane. Functionally, regulator of peptidoglycan synthesis that is essential for the function of penicillin-binding protein 1B (PBP1b). In Yersinia enterocolitica serotype O:8 / biotype 1B (strain NCTC 13174 / 8081), this protein is Penicillin-binding protein activator LpoB.